The primary structure comprises 239 residues: Ribosomal RNA small subunit methyltransferase G (239 aa).

S-adenosyl-L-methionine is bound by residues Gly77, Phe82, 128–129, and Arg147; that span reads AE.

This sequence belongs to the methyltransferase superfamily. RNA methyltransferase RsmG family.

The protein localises to the cytoplasm. Specifically methylates the N7 position of guanine in position 535 of 16S rRNA. The chain is Ribosomal RNA small subunit methyltransferase G from Bacillus mycoides (strain KBAB4) (Bacillus weihenstephanensis).